A 290-amino-acid chain; its full sequence is Glycine--tRNA ligase alpha subunit (290 aa).

Belongs to the class-II aminoacyl-tRNA synthetase family. In terms of assembly, tetramer of two alpha and two beta subunits.

It localises to the cytoplasm. It carries out the reaction tRNA(Gly) + glycine + ATP = glycyl-tRNA(Gly) + AMP + diphosphate. The polypeptide is Glycine--tRNA ligase alpha subunit (Syntrophobacter fumaroxidans (strain DSM 10017 / MPOB)).